Consider the following 252-residue polypeptide: Cytochrome c oxidase subunit 2 (252 aa).

Topologically, residues 1–39 (MFLIMLKGHILMDAPTPWGIFFQDSASPQMEGIMELHNN) are mitochondrial intermembrane. A helical transmembrane segment spans residues 40–59 (IMFYLAIILFTVTWMMITII). At 60–81 (RNFVAKKSPIAHKYMNHGTLIE) the chain is on the mitochondrial matrix side. A helical transmembrane segment spans residues 82 to 105 (LIWTITPAFILILIAFPSFKLLYL). At 106-252 (MDEVMDPSLV…LLWLRDQMEG (147 aa)) the chain is on the mitochondrial intermembrane side. The Cu cation site is built by histidine 184, cysteine 219, glutamate 221, cysteine 223, histidine 227, and methionine 230. Residue glutamate 221 coordinates Mg(2+).

This sequence belongs to the cytochrome c oxidase subunit 2 family. Component of the cytochrome c oxidase (complex IV, CIV), a multisubunit enzyme composed of a catalytic core of 3 subunits and several supernumerary subunits. The complex exists as a monomer or a dimer and forms supercomplexes (SCs) in the inner mitochondrial membrane with ubiquinol-cytochrome c oxidoreductase (cytochrome b-c1 complex, complex III, CIII). The cofactor is Cu cation.

The protein resides in the mitochondrion inner membrane. It catalyses the reaction 4 Fe(II)-[cytochrome c] + O2 + 8 H(+)(in) = 4 Fe(III)-[cytochrome c] + 2 H2O + 4 H(+)(out). Component of the cytochrome c oxidase, the last enzyme in the mitochondrial electron transport chain which drives oxidative phosphorylation. The respiratory chain contains 3 multisubunit complexes succinate dehydrogenase (complex II, CII), ubiquinol-cytochrome c oxidoreductase (cytochrome b-c1 complex, complex III, CIII) and cytochrome c oxidase (complex IV, CIV), that cooperate to transfer electrons derived from NADH and succinate to molecular oxygen, creating an electrochemical gradient over the inner membrane that drives transmembrane transport and the ATP synthase. Cytochrome c oxidase is the component of the respiratory chain that catalyzes the reduction of oxygen to water. Electrons originating from reduced cytochrome c in the intermembrane space (IMS) are transferred via the dinuclear copper A center (CU(A)) of subunit 2 and heme A of subunit 1 to the active site in subunit 1, a binuclear center (BNC) formed by heme A3 and copper B (CU(B)). The BNC reduces molecular oxygen to 2 water molecules using 4 electrons from cytochrome c in the IMS and 4 protons from the mitochondrial matrix. The polypeptide is Cytochrome c oxidase subunit 2 (cox2) (Emericella nidulans (Aspergillus nidulans)).